We begin with the raw amino-acid sequence, 341 residues long: Anthranilate phosphoribosyltransferase (341 aa).

5-phospho-alpha-D-ribose 1-diphosphate contacts are provided by residues glycine 79, 82–83 (GD), threonine 87, 89–92 (NIST), 107–115 (KHGNRAATS), and serine 119. Glycine 79 provides a ligand contact to anthranilate. Mg(2+) is bound at residue serine 91. Asparagine 110 serves as a coordination point for anthranilate. Arginine 165 lines the anthranilate pocket. Residues aspartate 224 and glutamate 225 each contribute to the Mg(2+) site.

Belongs to the anthranilate phosphoribosyltransferase family. Homodimer. Requires Mg(2+) as cofactor.

The enzyme catalyses N-(5-phospho-beta-D-ribosyl)anthranilate + diphosphate = 5-phospho-alpha-D-ribose 1-diphosphate + anthranilate. It participates in amino-acid biosynthesis; L-tryptophan biosynthesis; L-tryptophan from chorismate: step 2/5. In terms of biological role, catalyzes the transfer of the phosphoribosyl group of 5-phosphorylribose-1-pyrophosphate (PRPP) to anthranilate to yield N-(5'-phosphoribosyl)-anthranilate (PRA). This is Anthranilate phosphoribosyltransferase from Symbiobacterium thermophilum (strain DSM 24528 / JCM 14929 / IAM 14863 / T).